Reading from the N-terminus, the 338-residue chain is Fructose-1,6-bisphosphatase 1 (338 aa).

A2 bears the N-acetylalanine mark. Residues 18–22 (VMEQG) and 28–32 (TGELT) each bind AMP. Residues D69 and E98 each contribute to the Mg(2+) site. 113 to 114 (KY) contacts AMP. Mg(2+) is bound by residues D119, L121, and D122. 122-125 (DGSS) is a substrate binding site. R141 is an AMP binding site. K151 bears the N6-succinyllysine mark. Substrate-binding positions include 213–216 (NEGY), 244–249 (RYVGSM), Y265, and 275–277 (KLR). Residues Y216, Y245, and Y265 each carry the phosphotyrosine modification. E281 is a binding site for Mg(2+).

It belongs to the FBPase class 1 family. In terms of assembly, homotetramer. Mg(2+) is required as a cofactor. Detected in pancreatic beta-cell lines MIN6 and beta-TC and in liver (at protein level). Preferentially expressed in liver, with lower levels detected in pancreatic islets and intestine, and very low levels in blood, muscle, brain and spleen.

The enzyme catalyses beta-D-fructose 1,6-bisphosphate + H2O = beta-D-fructose 6-phosphate + phosphate. It functions in the pathway carbohydrate biosynthesis; gluconeogenesis. Its activity is regulated as follows. Subject to complex allosteric regulation. The enzyme can assume an active R-state, or an inactive T-state. Intermediate conformations may exist. AMP acts as an allosteric inhibitor. AMP binding affects the turnover of bound substrate and not the affinity for substrate. Fructose 2,6-bisphosphate acts as a competitive inhibitor. Fructose 2,6-bisphosphate and AMP have synergistic effects. In terms of biological role, catalyzes the hydrolysis of fructose 1,6-bisphosphate to fructose 6-phosphate in the presence of divalent cations, acting as a rate-limiting enzyme in gluconeogenesis. Plays a role in regulating glucose sensing and insulin secretion of pancreatic beta-cells. Appears to modulate glycerol gluconeogenesis in liver. Important regulator of appetite and adiposity; increased expression of the protein in liver after nutrient excess increases circulating satiety hormones and reduces appetite-stimulating neuropeptides and thus seems to provide a feedback mechanism to limit weight gain. The sequence is that of Fructose-1,6-bisphosphatase 1 (Fbp1) from Mus musculus (Mouse).